Reading from the N-terminus, the 202-residue chain is Interleukin-17D (202 aa).

A signal peptide spans 1–15; it reads MLVAGFLLALPPSWA. The interval 65–85 is disordered; that stretch reads QARNASCPAGGRPADRRFRPP. N-linked (GlcNAc...) asparagine glycans are attached at residues Asn-68 and Asn-181.

It belongs to the IL-17 family. Expressed preferentially in adipose, skeletal muscle and CNS.

Its subcellular location is the secreted. In terms of biological role, induces expression of IL6, CXCL8/IL8, and CSF2/GM-CSF from endothelial cells. The sequence is that of Interleukin-17D (IL17D) from Homo sapiens (Human).